The following is a 281-amino-acid chain: Cell growth regulator with EF hand domain protein 1 (281 aa).

Positions 1 to 21 (MSRWLMQMLMLPLLLLPLGQA) are cleaved as a signal peptide. EF-hand domains are found at residues 71 to 106 (NREQVLLYLFALHDFDQNGQLDGLELLSMLTAALAP) and 115 to 150 (PVILVVDMVLETQDLDGDGLMTPAELINFPGEAPKR). The Ca(2+) site is built by Asp84, Asp86, Asn88, Gln90, Glu95, Asp128, Asp130, Asp132, and Glu139. The segment at 146-281 (EAPKRAESLP…HSIQLENDEI (136 aa)) is disordered. Positions 169–184 (LLANSPLQSETQQSLG) are enriched in polar residues. A compositionally biased stretch (basic and acidic residues) spans 185 to 213 (TKEEITSQVEAKRALEPEQEAGHHIETKV). Phosphoserine occurs at positions 217 and 228. Positions 234 to 256 (GPREDAERQVESKDNEGEAKDLP) are enriched in basic and acidic residues.

In terms of processing, probably digested extracellularly by an unknown serine protease generating extremely hydrophobic bioactive peptides. In terms of tissue distribution, expressed predominantly in whole brain and kidney, with limited expression in heart, lung, liver, and skeletal muscle and no expression in spleen and testis. Also expressed in pituitary gland, adrenal gland, digestive tract, and reproductive organs.

Its subcellular location is the secreted. In terms of biological role, mediates cell-cell adhesion in a calcium-dependent manner. Able to inhibit growth in several cell lines. The polypeptide is Cell growth regulator with EF hand domain protein 1 (Rattus norvegicus (Rat)).